Consider the following 263-residue polypeptide: Small ribosomal subunit protein uS2 (263 aa).

Residues 230-249 (GEALVNEEKEITDEEKKEVL) show a composition bias toward basic and acidic residues. A disordered region spans residues 230–263 (GEALVNEEKEITDEEKKEVLDEAMSEEDFGEEQE). Residues 250–263 (DEAMSEEDFGEEQE) show a composition bias toward acidic residues.

It belongs to the universal ribosomal protein uS2 family.

The sequence is that of Small ribosomal subunit protein uS2 from Campylobacter jejuni subsp. jejuni serotype O:2 (strain ATCC 700819 / NCTC 11168).